Here is a 418-residue protein sequence, read N- to C-terminus: UPF0754 membrane protein alr5253 (418 aa).

The next 2 membrane-spanning stretches (helical) occupy residues 10–30 (WSHL…GYFT) and 394–414 (IVSL…AFFI).

The protein belongs to the UPF0754 family.

Its subcellular location is the cell inner membrane. This chain is UPF0754 membrane protein alr5253, found in Nostoc sp. (strain PCC 7120 / SAG 25.82 / UTEX 2576).